A 324-amino-acid polypeptide reads, in one-letter code: Elongation factor Ts, mitochondrial (324 aa).

The N-terminal 44 residues, 1–44 (MSLLRSLRFFPVACTGRSARAVLLQPSQPWHTLHAGPSLSSSAS), are a transit peptide targeting the mitochondrion. Lysine 75 and lysine 132 each carry N6-succinyllysine. At serine 269 the chain carries Phosphoserine.

It belongs to the EF-Ts family.

It is found in the mitochondrion. Its function is as follows. Associates with the EF-Tu.GDP complex and induces the exchange of GDP to GTP. It remains bound to the aminoacyl-tRNA.EF-Tu.GTP complex up to the GTP hydrolysis stage on the ribosome. The polypeptide is Elongation factor Ts, mitochondrial (Tsfm) (Rattus norvegicus (Rat)).